The chain runs to 352 residues: Glycerol-3-phosphate dehydrogenase 1-like protein (352 aa).

13–18 (GSGNWG) contacts NAD(+). Lys123 is a substrate binding site. NAD(+) is bound at residue Ala156. Lys207 functions as the Proton acceptor in the catalytic mechanism. NAD(+) contacts are provided by Arg272, Lys299, and Gln301. 272-273 (RN) serves as a coordination point for substrate.

It belongs to the NAD-dependent glycerol-3-phosphate dehydrogenase family.

It is found in the cytoplasm. The catalysed reaction is sn-glycerol 3-phosphate + NAD(+) = dihydroxyacetone phosphate + NADH + H(+). Functionally, plays a role in regulating cardiac sodium current. The sequence is that of Glycerol-3-phosphate dehydrogenase 1-like protein (gpd1l) from Xenopus tropicalis (Western clawed frog).